We begin with the raw amino-acid sequence, 123 residues long: Methicillin resistance regulatory protein MecI (123 aa).

A DNA-binding region (H-T-H motif) is located at residues glutamate 7–serine 71. The tract at residues glutamate 74 to lysine 123 is important for dimerization.

Belongs to the BlaI transcriptional regulatory family. Monomer and homodimer. In terms of processing, upon exposure to beta-lactams, proteolytic cleavage at a single site impairs dimerization and abolishes repressor activity.

Its subcellular location is the cytoplasm. Functionally, transcriptional repressor that constitutively blocks the transcription of the gene for the penicillin-binding protein MecA. Binds DNA as a dimer. The protein is Methicillin resistance regulatory protein MecI (mecI) of Staphylococcus aureus (strain Mu50 / ATCC 700699).